A 193-amino-acid chain; its full sequence is MGFLEDKKRTLMNLELAIREGLVDEEIIPILNKINEIDNYYTTSSCIGRVGIMEIPKDKNPKLYSRWLGKWHHYASYDELFNALKNKKEGYIVFVMNSPILHIACKDIESAKKMLELAIHSGLKASSIKSISDKRVIVEILTTYKVDTPIGEDGEIFVDNNYLKFLLDYSNSKLKRAREILMRWANRLDELKK.

The protein belongs to the TYW3 family.

The enzyme catalyses 4-demethyl-7-[(3S)-3-amino-3-carboxypropyl]wyosine(37) in tRNA(Phe) + S-adenosyl-L-methionine = 7-[(3S)-3-amino-3-carboxypropyl]wyosine(37) in tRNA(Phe) + S-adenosyl-L-homocysteine + H(+). Functionally, S-adenosyl-L-methionine-dependent methyltransferase that acts as a component of the wyosine derivatives biosynthesis pathway. Probably methylates N-4 position of wybutosine-86 to produce wybutosine-72. This Methanocaldococcus jannaschii (strain ATCC 43067 / DSM 2661 / JAL-1 / JCM 10045 / NBRC 100440) (Methanococcus jannaschii) protein is tRNA(Phe) 7-((3-amino-3-carboxypropyl)-4-demethylwyosine(37)-N(4))-methyltransferase.